We begin with the raw amino-acid sequence, 266 residues long: MRTEPLCGASPLLVPGDPYSVVVLLQGYAEPEGVGDAVRADGSVTLVLPQTRGPASSHRESPRGSGGAEAALEEAARGPILVDTGGPWAREALLGALAGQGVAPGDVTLVVGTHGHSDHIGNLGLFPGAALLVSHDFCLPGGRYLPHGLGEGQPLRLGPGLEVWATPGHGGQRDVSVVVAGTALGTVVVAGDVFERDGDEDSWQALSEDPAAQERSRKRVLVVADVVVPGHGPPFRVLREASQPETEGGGNSQQEPVVGDEEPALH.

The segment at 48-71 is disordered; sequence LPQTRGPASSHRESPRGSGGAEAA. His-114, His-116, Asp-118, His-119, His-169, Asp-192, and His-231 together coordinate Zn(2+). Positions 229-266 are disordered; it reads PGHGPPFRVLREASQPETEGGGNSQQEPVVGDEEPALH.

Belongs to the metallo-beta-lactamase superfamily. Glyoxalase II family. Homodimer. Requires Zn(2+) as cofactor.

The protein localises to the cytoplasm. It is found in the cytosol. It localises to the nucleus. It catalyses the reaction a ribonucleotidyl-ribonucleotide-RNA + H2O = a 3'-end ribonucleotide-RNA + a 5'-end 5'-phospho-ribonucleoside-RNA + H(+). Its function is as follows. Endoribonuclease that catalyzes the hydrolysis of histone-coding pre-mRNA 3'-end. Involved in histone pre-mRNA processing during the S-phase of the cell cycle, which is required for entering/progressing through S-phase. Cleaves histone pre-mRNA at a major and a minor cleavage site after the 5'-ACCCA-3' and the 5'-ACCCACA-3' sequence, respectively, and located downstream of the stem-loop. May require the presence of the HDE element located at the histone pre-RNA 3'-end to avoid non-specific cleavage. The polypeptide is Metallo-beta-lactamase domain-containing protein 1 (Homo sapiens (Human)).